Here is an 892-residue protein sequence, read N- to C-terminus: Microsomal triglyceride transfer protein homolog (892 aa).

The signal sequence occupies residues 1–19; that stretch reads MFSSRIWLLLAVTVGVCLA.

As to quaternary structure, heterodimer; heterodimerizes with protein disulfide isomerase.

It is found in the endoplasmic reticulum. Its function is as follows. Catalyzes the transport of cholesteryl ester, and phospholipid between phospholipid surfaces. Does not catalyze transport of triglycerides. Required for the assembly and secretion of plasma lipoproteins that contain apolipoprotein B. Required for normal expression of klf-3. The chain is Microsomal triglyceride transfer protein homolog from Caenorhabditis elegans.